We begin with the raw amino-acid sequence, 87 residues long: Small ribosomal subunit protein eS21B (87 aa).

Met1 carries the N-acetylmethionine modification.

The protein belongs to the eukaryotic ribosomal protein eS21 family. In terms of assembly, component of the small ribosomal subunit (SSU). Mature yeast ribosomes consist of a small (40S) and a large (60S) subunit. The 40S small subunit contains 1 molecule of ribosomal RNA (18S rRNA) and 33 different proteins (encoded by 57 genes). The large 60S subunit contains 3 rRNA molecules (25S, 5.8S and 5S rRNA) and 46 different proteins (encoded by 81 genes). Post-translationally, N-terminally acetylated by acetyltransferase NatB.

The protein localises to the cytoplasm. In terms of biological role, component of the ribosome, a large ribonucleoprotein complex responsible for the synthesis of proteins in the cell. The small ribosomal subunit (SSU) binds messenger RNAs (mRNAs) and translates the encoded message by selecting cognate aminoacyl-transfer RNA (tRNA) molecules. The large subunit (LSU) contains the ribosomal catalytic site termed the peptidyl transferase center (PTC), which catalyzes the formation of peptide bonds, thereby polymerizing the amino acids delivered by tRNAs into a polypeptide chain. The nascent polypeptides leave the ribosome through a tunnel in the LSU and interact with protein factors that function in enzymatic processing, targeting, and the membrane insertion of nascent chains at the exit of the ribosomal tunnel. eS21 is required for the processing of the 20S rRNA-precursor to mature 18S rRNA in a late step of the maturation of 40S ribosomal subunits. Has a physiological role leading to 18S rRNA stability. The chain is Small ribosomal subunit protein eS21B from Saccharomyces cerevisiae (strain ATCC 204508 / S288c) (Baker's yeast).